Here is a 476-residue protein sequence, read N- to C-terminus: Thymidine phosphorylase (476 aa).

A compositionally biased stretch (pro residues) spans 1 to 11; sequence MAAPGTPPPLA. The segment at 1-26 is disordered; sequence MAAPGTPPPLAPETAGADSGGGSGEH. Residues T6 and T475 each carry the phosphothreonine modification.

The protein belongs to the thymidine/pyrimidine-nucleoside phosphorylase family. As to quaternary structure, homodimer.

The enzyme catalyses thymidine + phosphate = 2-deoxy-alpha-D-ribose 1-phosphate + thymine. The protein operates within pyrimidine metabolism; dTMP biosynthesis via salvage pathway; dTMP from thymine: step 1/2. Catalyzes the reversible phosphorolysis of thymidine. The produced molecules are then utilized as carbon and energy sources or in the rescue of pyrimidine bases for nucleotide synthesis. In Rattus norvegicus (Rat), this protein is Thymidine phosphorylase (Tymp).